The chain runs to 262 residues: Troponin T, slow skeletal muscle (262 aa).

Acidic residues predominate over residues 1 to 31; it reads MSDAEEQEYEEEQPEEEEAAEEEEAPEEPEP. 3 disordered regions span residues 1-59, 107-153, and 165-197; these read MSDA…PEGE, RAER…KKKV, and LVKA…NIDH. Ser2 is subject to Phosphoserine; by CK2. Residues 32 to 41 are compositionally biased toward basic and acidic residues; sequence VAEREEERPK. Pro residues predominate over residues 43 to 55; that stretch reads SRPVVPPLIPPKI. Basic and acidic residues-rich tracts occupy residues 107–149 and 177–197; these read RAER…DDAK and TGRE…NIDH.

This sequence belongs to the troponin T family. As to quaternary structure, interacts with TPM3.

Its function is as follows. Troponin T is the tropomyosin-binding subunit of troponin, the thin filament regulatory complex which confers calcium-sensitivity to striated muscle actomyosin ATPase activity. This Sus scrofa (Pig) protein is Troponin T, slow skeletal muscle (TNNT1).